The following is a 249-amino-acid chain: Ditrans,polycis-undecaprenyl-diphosphate synthase ((2E,6E)-farnesyl-diphosphate specific) (249 aa).

Asp29 is an active-site residue. Asp29 is a binding site for Mg(2+). Substrate contacts are provided by residues 30–33, Trp34, Arg42, His46, and 74–76; these read GNGR and STE. Asn77 serves as the catalytic Proton acceptor. Residues Trp78, Arg80, Arg197, and 203-205 contribute to the substrate site; that span reads RLS. Glu216 provides a ligand contact to Mg(2+).

The protein belongs to the UPP synthase family. Homodimer. Mg(2+) serves as cofactor.

The enzyme catalyses 8 isopentenyl diphosphate + (2E,6E)-farnesyl diphosphate = di-trans,octa-cis-undecaprenyl diphosphate + 8 diphosphate. Generates ditrans,octacis-undecaprenyl pyrophosphate (UPP) from isopentenyl pyrophosphate (IPP) and farnesyl diphosphate. UPP is the precursor of glycosyl carrier lipid in the biosynthesis of bacterial cell wall polysaccharide components such as peptidoglycan and lipopolysaccharide. In Micrococcus luteus (Micrococcus lysodeikticus), this protein is Ditrans,polycis-undecaprenyl-diphosphate synthase ((2E,6E)-farnesyl-diphosphate specific) (uppS).